Reading from the N-terminus, the 855-residue chain is RE1-silencing transcription factor (855 aa).

The C2H2-type 1 zinc-finger motif lies at 141 to 163; that stretch reads FFCKPCQYQGENEQEFIVHIRTH. A disordered region spans residues 172 to 199; sequence NGGDSDEDLSADAGPQTSVPNAESAESN. A compositionally biased stretch (polar residues) spans 186–199; that stretch reads PQTSVPNAESAESN. C2H2-type zinc fingers lie at residues 204–226, 236–258, 264–286, 292–314, 320–343, 349–371, and 377–400; these read IRCE…LKHH, FKCT…LRNH, FTCS…IRTH, FQCI…MRTH, FKCD…RQVH, LSCP…VELH, and FLCP…KSRH. The disordered stretch occupies residues 458 to 811; that stretch reads NAVVETEKSS…ETPTEERDAS (354 aa). Basic and acidic residues-rich tracts occupy residues 462 to 472, 481 to 496, and 504 to 535; these read ETEKSSKKNMD, NEKK…EKTA, and AVKD…EKAL. Over residues 548-569 the composition is skewed to polar residues; the sequence is SSVQQQSDDCEQTQHTPQQNET. Residues 570 to 580 show a composition bias toward basic and acidic residues; the sequence is QENRPEKENRS. The span at 594-604 shows a compositional bias: basic residues; the sequence is QTKKPCKKQTK. Residues 628–638 are compositionally biased toward basic and acidic residues; it reads RKAENPAEPKQ. The span at 639–648 shows a compositional bias: basic residues; the sequence is RIKRTKKKKD. Residues 652–662 show a composition bias toward polar residues; sequence PTTSEANQTNP. 2 stretches are compositionally biased toward basic and acidic residues: residues 711–721 and 799–811; these read PAVEDVQRPLE and KLPE…RDAS. Residues 818-840 form a C2H2-type 9 zinc finger; the sequence is HTCIFCDRSFALEMDYRKHLNRH.

It is found in the nucleus. The protein resides in the cytoplasm. In terms of biological role, transcriptional repressor which binds neuron-restrictive silencer element (NRSE) and represses neuronal gene transcription in non-neuronal cells. The sequence is that of RE1-silencing transcription factor (rest) from Danio rerio (Zebrafish).